The following is a 173-amino-acid chain: Dual-action ribosomal maturation protein DarP (173 aa).

This sequence belongs to the DarP family.

Its subcellular location is the cytoplasm. Member of a network of 50S ribosomal subunit biogenesis factors which assembles along the 30S-50S interface, preventing incorrect 23S rRNA structures from forming. Promotes peptidyl transferase center (PTC) maturation. This is Dual-action ribosomal maturation protein DarP from Pseudomonas entomophila (strain L48).